A 147-amino-acid polypeptide reads, in one-letter code: Protein SPMIP3 (147 aa).

The polypeptide is Protein SPMIP3 (Homo sapiens (Human)).